The chain runs to 169 residues: Gametocyte-specific factor 1-like (169 aa).

2 CHHC U11-48K-type zinc fingers span residues 6-33 and 40-67; these read LETC…RRKN and MASC…VNKS. Zn(2+) is bound by residues C9, H15, H25, C29, C43, H49, H59, and C63. Disordered regions lie at residues 67–103 and 131–169; these read STME…LPNP and SDTR…LLKA. Residues 131–158 show a composition bias toward basic and acidic residues; the sequence is SDTRESETDDHNPIPDCPRRRSSDRESE.

It belongs to the UPF0224 (FAM112) family.

The chain is Gametocyte-specific factor 1-like (GTSF1L) from Bos taurus (Bovine).